We begin with the raw amino-acid sequence, 103 residues long: Large ribosomal subunit protein mL41 (103 aa).

Belongs to the mitochondrion-specific ribosomal protein mL41 family. As to quaternary structure, component of the mitochondrial large ribosomal subunit (mt-LSU). Mature N.crassa 74S mitochondrial ribosomes consist of a small (37S) and a large (54S) subunit. The 37S small subunit contains a 16S ribosomal RNA (16S mt-rRNA) and 32 different proteins. The 54S large subunit contains a 23S rRNA (23S mt-rRNA) and 42 different proteins.

It localises to the mitochondrion. Functionally, component of the mitochondrial ribosome (mitoribosome), a dedicated translation machinery responsible for the synthesis of mitochondrial genome-encoded proteins, including at least some of the essential transmembrane subunits of the mitochondrial respiratory chain. The mitoribosomes are attached to the mitochondrial inner membrane and translation products are cotranslationally integrated into the membrane. The protein is Large ribosomal subunit protein mL41 (mrpl27) of Neurospora crassa (strain ATCC 24698 / 74-OR23-1A / CBS 708.71 / DSM 1257 / FGSC 987).